Consider the following 252-residue polypeptide: Cilia- and flagella-associated protein 300 (252 aa).

It belongs to the CFAP300 family.

It localises to the cytoplasm. Its subcellular location is the cytoskeleton. The protein localises to the cilium axoneme. Cilium- and flagellum-specific protein that plays a role in axonemal structure organization and motility. Plays a role in outer and inner axonemal dynein arm assembly. This Paramecium tetraurelia protein is Cilia- and flagella-associated protein 300.